We begin with the raw amino-acid sequence, 865 residues long: Protein translocase subunit SecA (865 aa).

Residues Gln93, 111–115 (GEGKT), and Asp501 each bind ATP. Positions 841, 843, 852, and 853 each coordinate Zn(2+).

This sequence belongs to the SecA family. As to quaternary structure, monomer and homodimer. Part of the essential Sec protein translocation apparatus which comprises SecA, SecYEG and auxiliary proteins SecDF-YajC and YidC. The cofactor is Zn(2+).

It is found in the cell inner membrane. The protein resides in the cytoplasm. The enzyme catalyses ATP + H2O + cellular proteinSide 1 = ADP + phosphate + cellular proteinSide 2.. In terms of biological role, part of the Sec protein translocase complex. Interacts with the SecYEG preprotein conducting channel. Has a central role in coupling the hydrolysis of ATP to the transfer of proteins into and across the cell membrane, serving as an ATP-driven molecular motor driving the stepwise translocation of polypeptide chains across the membrane. The sequence is that of Protein translocase subunit SecA from Helicobacter pylori (strain J99 / ATCC 700824) (Campylobacter pylori J99).